The primary structure comprises 710 residues: Conserved oligomeric Golgi complex subunit 2 (710 aa).

It belongs to the COG2 family. In terms of assembly, component of the conserved oligomeric Golgi complex which is composed of eight different subunits and is required for normal Golgi morphology and localization.

It is found in the golgi apparatus membrane. Its function is as follows. Required for normal Golgi morphology and function. The chain is Conserved oligomeric Golgi complex subunit 2 from Drosophila melanogaster (Fruit fly).